Here is a 283-residue protein sequence, read N- to C-terminus: Homeobox protein BarH-like 2 (283 aa).

Disordered regions lie at residues 107–141 and 198–283; these read AAAA…RRSR and KGGQ…PPLS. Residues 122-132 are compositionally biased toward polar residues; it reads SSESETEQPTP. Positions 139–198 form a DNA-binding region, homeobox; sequence RSRTIFTELQLMGLEKKFQKQKYLSTPDRLDLAQSLGLTQLQVKTWYQNRRMKWKKMVLK. Positions 268-277 are enriched in low complexity; that stretch reads QPQELSEASS.

The protein belongs to the BAR homeobox family. As to expression, nervous system, particularly in the telencephalon, spinal cord, and dorsal root ganglia.

The protein localises to the nucleus. Functionally, transcription factor. Binds optimally to the DNA consensus sequence 5'-YYTAATGRTTTTY-3'. May control the expression of neural adhesion molecules such as L1 or Ng-CAM during embryonic development of both the central and peripherical nervous system. May be involved in controlling adhesive processes in keratinizing epithelia. The polypeptide is Homeobox protein BarH-like 2 (Barx2) (Mus musculus (Mouse)).